Here is a 451-residue protein sequence, read N- to C-terminus: C4-dicarboxylate transport protein (451 aa).

The next 9 membrane-spanning stretches (helical) occupy residues 17-37, 53-73, 85-105, 153-173, 193-213, 231-251, 306-326, 339-359, and 361-381; these read SLYV…HFYP, LIKM…IAGM, LALL…LIVV, AFAK…GFAL, VLFT…FGAM, LMGS…GLIA, GYSF…VFIA, ITLL…TGSG, and IVLA…LALI.

The protein belongs to the dicarboxylate/amino acid:cation symporter (DAACS) (TC 2.A.23) family.

It localises to the cell inner membrane. In terms of biological role, responsible for the transport of dicarboxylates such as succinate, fumarate, and malate from the periplasm across the membrane. The polypeptide is C4-dicarboxylate transport protein (Paracidovorax citrulli (strain AAC00-1) (Acidovorax citrulli)).